A 293-amino-acid chain; its full sequence is D-alanine--D-alanine ligase (293 aa).

Positions 98 to 291 (KIIWEQHSLT…FNKLVTSIIN (194 aa)) constitute an ATP-grasp domain. 124-177 (NFPLPWAVKPTLEGSSIGISKVDNQMQLNDALMLAWQYAPYALIEQWIKGDEYT) lines the ATP pocket. Residues D245, E258, and N260 each coordinate Mg(2+).

It belongs to the D-alanine--D-alanine ligase family. Mg(2+) is required as a cofactor. Requires Mn(2+) as cofactor.

It is found in the cytoplasm. The enzyme catalyses 2 D-alanine + ATP = D-alanyl-D-alanine + ADP + phosphate + H(+). It functions in the pathway cell wall biogenesis; peptidoglycan biosynthesis. Functionally, cell wall formation. This is D-alanine--D-alanine ligase from Vesicomyosocius okutanii subsp. Calyptogena okutanii (strain HA).